A 648-amino-acid chain; its full sequence is TBC1 domain family member 17 (648 aa).

The tract at residues 218-309 (DPYSTTFSSF…PELKNRIFSG (92 aa)) is required for interaction with OPTN. The tract at residues 240–259 (PQPEGAASDLPPPPDDEPEP) is disordered. The region spanning 310 to 520 (GLSPSLRREA…RLWEVLWTGL (211 aa)) is the Rab-GAP TBC domain. The disordered stretch occupies residues 594 to 648 (LAPPAEPHSPSPTASPLPLSPTRAPPTPPPSTDTAPQPDSSLEILPEEEDEGADS). Residues 597-624 (PAEPHSPSPTASPLPLSPTRAPPTPPPS) show a composition bias toward pro residues. Residues Ser602 and Ser604 each carry the phosphoserine modification. Residue Thr606 is modified to Phosphothreonine. Ser608 carries the phosphoserine modification. Thr615 carries the post-translational modification Phosphothreonine. Low complexity predominate over residues 625–634 (TDTAPQPDSS). Over residues 638-648 (LPEEEDEGADS) the composition is skewed to acidic residues.

As to quaternary structure, interacts with OPTN; this interaction mediates TBC1D17 transient association with Rab8.

It is found in the cytoplasmic vesicle. It localises to the autophagosome. Its subcellular location is the cytoplasm. The protein localises to the recycling endosome. Its function is as follows. Probable RAB GTPase-activating protein that inhibits RAB8A/B function. Reduces Rab8 recruitment to tubules emanating from the endocytic recycling compartment (ERC) and inhibits Rab8-mediated endocytic trafficking, such as that of transferrin receptor (TfR). Involved in regulation of autophagy. In Homo sapiens (Human), this protein is TBC1 domain family member 17.